The chain runs to 127 residues: NADPH-dependent 7-cyano-7-deazaguanine reductase (127 aa).

C40 acts as the Thioimide intermediate in catalysis. Residue D47 is the Proton donor of the active site. Substrate is bound by residues 62 to 64 (VEL) and 81 to 82 (HE).

The protein belongs to the GTP cyclohydrolase I family. QueF type 1 subfamily.

It is found in the cytoplasm. It carries out the reaction 7-aminomethyl-7-carbaguanine + 2 NADP(+) = 7-cyano-7-deazaguanine + 2 NADPH + 3 H(+). Its pathway is tRNA modification; tRNA-queuosine biosynthesis. In terms of biological role, catalyzes the NADPH-dependent reduction of 7-cyano-7-deazaguanine (preQ0) to 7-aminomethyl-7-deazaguanine (preQ1). The polypeptide is NADPH-dependent 7-cyano-7-deazaguanine reductase (Campylobacter jejuni (strain RM1221)).